The chain runs to 479 residues: ATP synthase subunit beta (479 aa).

Position 168 to 175 (168 to 175 (GGAGVGKT)) interacts with ATP.

This sequence belongs to the ATPase alpha/beta chains family. As to quaternary structure, F-type ATPases have 2 components, CF(1) - the catalytic core - and CF(0) - the membrane proton channel. CF(1) has five subunits: alpha(3), beta(3), gamma(1), delta(1), epsilon(1). CF(0) has three main subunits: a(1), b(2) and c(9-12). The alpha and beta chains form an alternating ring which encloses part of the gamma chain. CF(1) is attached to CF(0) by a central stalk formed by the gamma and epsilon chains, while a peripheral stalk is formed by the delta and b chains.

It is found in the cell membrane. The catalysed reaction is ATP + H2O + 4 H(+)(in) = ADP + phosphate + 5 H(+)(out). Its function is as follows. Produces ATP from ADP in the presence of a proton gradient across the membrane. The catalytic sites are hosted primarily by the beta subunits. In Frankia casuarinae (strain DSM 45818 / CECT 9043 / HFP020203 / CcI3), this protein is ATP synthase subunit beta.